The primary structure comprises 344 residues: Putative NAD(P)H nitroreductase MT3217 (344 aa).

FMN-binding positions include 40–44 (QPWRW) and Arg-326.

This sequence belongs to the nitroreductase family. Interacts with human TLR2. FMN is required as a cofactor.

Functionally, stimulates pro-inflammatory cytokine expression via TLR2 signaling pathway. Activation of TLR2 results in the phosphorylation and activation of NF-kappa-B. Also induces TLR2 expression. May influence the innate immune responses to facilitate the survival of M.tuberculosis in the granulomatous microenvironment. The chain is Putative NAD(P)H nitroreductase MT3217 from Mycobacterium tuberculosis (strain CDC 1551 / Oshkosh).